Here is a 144-residue protein sequence, read N- to C-terminus: MEQTLSIIKPDSVSKAHIGEILSIFEQSGLRIAAMKMMHLSQTEAEGFYFVHRERPFFQELVDFMVSGPVVVLVLEGANAVSRNRELMGATNPAEAASGTIRAKFGESIGVNAVHGSDTLENAAVEIAYFFSKIEVVNASKPLV.

The ATP site is built by Lys-9, Phe-57, Arg-85, Thr-91, Arg-102, and Asn-112. Residue His-115 is the Pros-phosphohistidine intermediate of the active site.

Belongs to the NDK family. Homotetramer. It depends on Mg(2+) as a cofactor.

The protein resides in the cytoplasm. The enzyme catalyses a 2'-deoxyribonucleoside 5'-diphosphate + ATP = a 2'-deoxyribonucleoside 5'-triphosphate + ADP. It carries out the reaction a ribonucleoside 5'-diphosphate + ATP = a ribonucleoside 5'-triphosphate + ADP. Its function is as follows. Major role in the synthesis of nucleoside triphosphates other than ATP. The ATP gamma phosphate is transferred to the NDP beta phosphate via a ping-pong mechanism, using a phosphorylated active-site intermediate. This is Nucleoside diphosphate kinase from Chlamydia pneumoniae (Chlamydophila pneumoniae).